The chain runs to 252 residues: Imidazole glycerol phosphate synthase subunit HisF (252 aa).

Residues D12 and D131 contribute to the active site.

This sequence belongs to the HisA/HisF family. As to quaternary structure, heterodimer of HisH and HisF.

It localises to the cytoplasm. It catalyses the reaction 5-[(5-phospho-1-deoxy-D-ribulos-1-ylimino)methylamino]-1-(5-phospho-beta-D-ribosyl)imidazole-4-carboxamide + L-glutamine = D-erythro-1-(imidazol-4-yl)glycerol 3-phosphate + 5-amino-1-(5-phospho-beta-D-ribosyl)imidazole-4-carboxamide + L-glutamate + H(+). It participates in amino-acid biosynthesis; L-histidine biosynthesis; L-histidine from 5-phospho-alpha-D-ribose 1-diphosphate: step 5/9. Its function is as follows. IGPS catalyzes the conversion of PRFAR and glutamine to IGP, AICAR and glutamate. The HisF subunit catalyzes the cyclization activity that produces IGP and AICAR from PRFAR using the ammonia provided by the HisH subunit. The sequence is that of Imidazole glycerol phosphate synthase subunit HisF from Thermus thermophilus (strain ATCC 27634 / DSM 579 / HB8).